Reading from the N-terminus, the 663-residue chain is Transketolase 1 (663 aa).

His26 lines the substrate pocket. Lys46 is subject to N6-acetyllysine. Thiamine diphosphate contacts are provided by residues His66 and 114 to 116 (GPL). Asp155 is a Mg(2+) binding site. Thiamine diphosphate is bound by residues Gly156 and Asn185. Residues Asn185 and Ile187 each contribute to the Mg(2+) site. Residues His261, Arg358, and Ser385 each coordinate substrate. Position 261 (His261) interacts with thiamine diphosphate. Glu411 functions as the Proton donor in the catalytic mechanism. Phe437 contributes to the thiamine diphosphate binding site. The substrate site is built by His461, Asp469, His473, and Arg520.

The protein belongs to the transketolase family. Homodimer. It depends on Mg(2+) as a cofactor. The cofactor is Ca(2+). Mn(2+) serves as cofactor. Requires Co(2+) as cofactor. Thiamine diphosphate is required as a cofactor.

It carries out the reaction D-sedoheptulose 7-phosphate + D-glyceraldehyde 3-phosphate = aldehydo-D-ribose 5-phosphate + D-xylulose 5-phosphate. Catalyzes the transfer of a two-carbon ketol group from a ketose donor to an aldose acceptor, via a covalent intermediate with the cofactor thiamine pyrophosphate. Thus, catalyzes the reversible transfer of a two-carbon ketol group from sedoheptulose-7-phosphate to glyceraldehyde-3-phosphate, producing xylulose-5-phosphate and ribose-5-phosphate. In Escherichia coli (strain K12), this protein is Transketolase 1 (tktA).